Here is a 709-residue protein sequence, read N- to C-terminus: Mucin-20 (709 aa).

Positions 1–25 (MGCLWGLALPLFFFCWEVGVSGSSA) are cleaved as a signal peptide. Residues 57-69 (TQTLSAETSSRAS) show a composition bias toward polar residues. Disordered stretches follow at residues 57-92 (TQTL…ARET) and 170-403 (KGLS…WSPG). A compositionally biased stretch (basic and acidic residues) spans 78–92 (AETRGAKRISPARET). Composition is skewed to low complexity over residues 173–182 (SSESSASSDS), 190–199 (SRASESSASS), 209–218 (SRASESSASS), 228–237 (SRASESSASS), 247–256 (SRASESSASS), 266–275 (SRASESSASS), 285–294 (SRASESSASS), 304–313 (SRASESSASS), 323–332 (SRASESSASS), 342–351 (SRASESSASS), 361–370 (SRASESSASS), and 380–389 (SRASESSASS). 11 consecutive repeat copies span residues 173 to 192 (SSES…PSRA), 193 to 211 (SESS…PSRA), 212 to 230 (SESS…PSRA), 231 to 249 (SESS…PSRA), 250 to 268 (SESS…PSRA), 269 to 287 (SESS…PSRA), 288 to 306 (SESS…PSRA), 307 to 325 (SESS…PSRA), 326 to 344 (SESS…PSRA), 345 to 363 (SESS…PSRA), and 364 to 382 (SESS…PSRA). The segment at 173–400 (SSESSASSDS…GPHPVITPSW (228 aa)) is 12 X 20 AA approximate tandem repeats of S-S-E-S-S-A-S-S-D-S-P-H-P-V-I-T-P-S-R-A. The stretch at 383–400 (SESSASSDGPHPVITPSW) is one 12; approximate repeat. A glycan (N-linked (GlcNAc...) asparagine) is linked at Asn-423. 2 disordered regions span residues 434–515 (SSIP…APGA) and 583–657 (NFTP…VSAG). Positions 450-656 (VKASSTSDPP…RTRPTTDVSA (207 aa)) are involved in oligomerization. Positions 474–489 (VTASAETLSTAGTTES) are enriched in polar residues. Positions 613–652 (TTTNSSRGTNSTLAKITTSAKTTMKPPTATPTTARTRPTT) are enriched in low complexity. 2 N-linked (GlcNAc...) asparagine glycosylation sites follow: Asn-616 and Asn-622. Positions 657 to 709 (GENGGFLLLRLSVASPEDLTDPRVAERLMQQLHRELHAHAPHFQVSLLRVRRG) are interaction with MET.

As to quaternary structure, interacts with MET; oligomerization increases affinity for MET. As to expression, highly expressed in kidney, moderately in placenta, lung, prostate, liver, and digestive system. In the kidney, localized in the proximal tubules but not in the glomerulus or distal tubules. Detected in most of the male urogenital tract epithelia, with the exception of epididymis.

Its subcellular location is the secreted. It localises to the apical cell membrane. The protein localises to the basolateral cell membrane. It is found in the cell projection. The protein resides in the microvillus membrane. In terms of biological role, may regulate MET signaling cascade. Seems to decrease hepatocyte growth factor (HGF)-induced transient MAPK activation. Blocks GRB2 recruitment to MET thus suppressing the GRB2-RAS pathway. Inhibits HGF-induced proliferation of MMP1 and MMP9 expression. This Homo sapiens (Human) protein is Mucin-20 (MUC20).